We begin with the raw amino-acid sequence, 65 residues long: Large ribosomal subunit protein bL33c (65 aa).

Belongs to the bacterial ribosomal protein bL33 family.

The protein resides in the plastid. It is found in the chloroplast. This chain is Large ribosomal subunit protein bL33c, found in Staurastrum punctulatum (Green alga).